The chain runs to 86 residues: MKTLLLTLVVVTIVCLDLGYTLTCLICPEKYCNKVHTCLNGEKICFKKYDQRKLLGKGYIRGCADTCPKLQNRDVIFCCSTDKCNL.

The first 21 residues, 1 to 21, serve as a signal peptide directing secretion; the sequence is MKTLLLTLVVVTIVCLDLGYT. 5 disulfide bridges follow: C24-C45, C27-C32, C38-C63, C67-C78, and C79-C84.

This sequence belongs to the three-finger toxin family. Ancestral subfamily. Orphan group II sub-subfamily. Expressed by the venom gland.

It is found in the secreted. Binds with low affinity to muscular (alpha-1-beta-1-delta-epsilon/CHRNA1-CHRNB1-CHRND-CHRNE) and very low affinity to neuronal (alpha-7/CHRNA7) nicotinic acetylcholine receptor (nAChR). In Naja atra (Chinese cobra), this protein is Probable weak neurotoxin NNAM3.